The primary structure comprises 229 residues: Complex I assembly factor TMEM126B, mitochondrial (229 aa).

Transmembrane regions (helical) follow at residues 71-91, 109-129, 140-160, and 198-218; these read IRGTLFFGVSSSLSGVMANLV, LTTLPFVATAVTYKLFVTDAL, VLRSSLIGVACGVSYPSALAF, and VPLLFQIIFGVFNGLYHYAVC.

Part of the mitochondrial complex I assembly/MCIA complex that comprises at least the core subunits TMEM126B, NDUFAF1, ECSIT and ACAD9 and complement subunits such as COA1 and TMEM186. Associates with the intermediate 370 kDa subcomplex of incompletely assembled complex I. Interacts with TMEM70.

It is found in the mitochondrion membrane. As part of the MCIA complex, involved in the assembly of the mitochondrial complex I. Participates in constructing the membrane arm of complex I. In Rattus norvegicus (Rat), this protein is Complex I assembly factor TMEM126B, mitochondrial.